A 60-amino-acid polypeptide reads, in one-letter code: Probable UDP-arabinopyranose mutase 1 (60 aa).

This sequence belongs to the RGP family. As to quaternary structure, homopentamer or homohexamer. Mn(2+) is required as a cofactor. Mg(2+) serves as cofactor.

Its subcellular location is the secreted. It is found in the cell wall. The protein localises to the cell junction. It localises to the plasmodesma. The protein resides in the golgi apparatus. The enzyme catalyses UDP-beta-L-arabinofuranose = UDP-beta-L-arabinopyranose. Functionally, probable UDP-L-arabinose mutase involved in the biosynthesis of cell wall non-cellulosic polysaccharides. The protein is Probable UDP-arabinopyranose mutase 1 of Phoenix dactylifera (Date palm).